The chain runs to 86 residues: Defensin-like protein a (86 aa).

The N-terminal stretch at 1 to 23 (MRCSVLFVVSYVIMSLLISHVQG) is a signal peptide. 4 disulfide bridges follow: C33–C81, C43–C67, C51–C76, and C65–C78.

It belongs to the DEFL family. In terms of tissue distribution, expressed specifically in anthers.

Its subcellular location is the secreted. Its function is as follows. Involved in self-incompatibility. This chain is Defensin-like protein a (SCRa), found in Arabidopsis lyrata (Lyre-leaved rock-cress).